We begin with the raw amino-acid sequence, 344 residues long: UDP-glycosyltransferase 73C4 (344 aa).

UDP-alpha-D-glucose is bound by residues S145, 202–203, 220–228, and 242–245; these read WA, HCGWNSSLE, and FAEQ.

The protein belongs to the UDP-glycosyltransferase family. In terms of tissue distribution, expressed in flowers and fruits.

The protein resides in the cytoplasm. It localises to the nucleus. Probable glucosyltransferase that cannot glycosylate abscisic acid (ABA) and auxin (IAA). This is UDP-glycosyltransferase 73C4 from Solanum lycopersicum (Tomato).